Here is a 148-residue protein sequence, read N- to C-terminus: uncharacterized protein (148 aa).

Over residues 1–17 (MEGLQRSTISFRRQGSS) the composition is skewed to polar residues. Residues 1 to 148 (MEGLQRSTIS…SRRRIVTKKR (148 aa)) form a disordered region. 2 stretches are compositionally biased toward basic and acidic residues: residues 36–47 (EQKDESQRDEQP) and 58–67 (KPIDEKDKLR). Phosphoserine occurs at positions 100 and 107. Over residues 128-148 (VNPRKRPPKRRSRRRIVTKKR) the composition is skewed to basic residues.

This is an uncharacterized protein from Arabidopsis thaliana (Mouse-ear cress).